The sequence spans 316 residues: Beta-ketoacyl-[acyl-carrier-protein] synthase III (316 aa).

Active-site residues include Cys-112 and His-243. An ACP-binding region spans residues Gln-244–Arg-248. Asn-273 is a catalytic residue.

The protein belongs to the thiolase-like superfamily. FabH family. In terms of assembly, homodimer.

It localises to the cytoplasm. It carries out the reaction malonyl-[ACP] + acetyl-CoA + H(+) = 3-oxobutanoyl-[ACP] + CO2 + CoA. The protein operates within lipid metabolism; fatty acid biosynthesis. Catalyzes the condensation reaction of fatty acid synthesis by the addition to an acyl acceptor of two carbons from malonyl-ACP. Catalyzes the first condensation reaction which initiates fatty acid synthesis and may therefore play a role in governing the total rate of fatty acid production. Possesses both acetoacetyl-ACP synthase and acetyl transacylase activities. Its substrate specificity determines the biosynthesis of branched-chain and/or straight-chain of fatty acids. This chain is Beta-ketoacyl-[acyl-carrier-protein] synthase III, found in Histophilus somni (strain 2336) (Haemophilus somnus).